A 155-amino-acid polypeptide reads, in one-letter code: Ribosomal RNA large subunit methyltransferase H (155 aa).

S-adenosyl-L-methionine-binding positions include L72, G104, and 123–128 (LAKITL).

It belongs to the RNA methyltransferase RlmH family. In terms of assembly, homodimer.

It localises to the cytoplasm. The enzyme catalyses pseudouridine(1915) in 23S rRNA + S-adenosyl-L-methionine = N(3)-methylpseudouridine(1915) in 23S rRNA + S-adenosyl-L-homocysteine + H(+). Functionally, specifically methylates the pseudouridine at position 1915 (m3Psi1915) in 23S rRNA. This Mycoplasma mycoides subsp. mycoides SC (strain CCUG 32753 / NCTC 10114 / PG1) protein is Ribosomal RNA large subunit methyltransferase H.